The primary structure comprises 362 residues: Chorismate synthase (362 aa).

Arginine 47 contributes to the NADP(+) binding site. FMN is bound by residues 124–126 (RSS), glycine 286, 301–305 (KPTAT), and arginine 327.

This sequence belongs to the chorismate synthase family. As to quaternary structure, homotetramer. It depends on FMNH2 as a cofactor.

The enzyme catalyses 5-O-(1-carboxyvinyl)-3-phosphoshikimate = chorismate + phosphate. It functions in the pathway metabolic intermediate biosynthesis; chorismate biosynthesis; chorismate from D-erythrose 4-phosphate and phosphoenolpyruvate: step 7/7. Its function is as follows. Catalyzes the anti-1,4-elimination of the C-3 phosphate and the C-6 proR hydrogen from 5-enolpyruvylshikimate-3-phosphate (EPSP) to yield chorismate, which is the branch point compound that serves as the starting substrate for the three terminal pathways of aromatic amino acid biosynthesis. This reaction introduces a second double bond into the aromatic ring system. This Synechocystis sp. (strain ATCC 27184 / PCC 6803 / Kazusa) protein is Chorismate synthase.